A 213-amino-acid chain; its full sequence is MKELTLLKKIKGGKEMNEYYERMEELFKREFAKEYLELAEQYYGIEESYYEEEQKLDEEEREITDWTGQIDEVYSNITIDEDWLFEKLIKRIELGGKVYTLFVEPYNSLLHRKPIVVVLKPLKGSKKLEEIVAKAYYSRFYWMEDPFYRDILLSRAYEAENTIKEDPEKFEEFVKMAEVLKEHEDRFLNIENIGIKFVEKNLSEFTLGFDLEE.

This is an uncharacterized protein from Aquifex aeolicus (strain VF5).